We begin with the raw amino-acid sequence, 924 residues long: Protein argonaute 4 (924 aa).

Disordered stretches follow at residues 1-37 (MDSTNGNGADLESANGANGSGVTEALPPPPPVIPPNV) and 159-185 (TRANGNGSPNGNESPSDGDRKRLRRPN). The segment covering 26-37 (LPPPPPVIPPNV) has biased composition (pro residues). Positions 162–173 (NGNGSPNGNESP) are enriched in low complexity. Residues 292-408 (PVVDFLIANQ…IPLELCALVP (117 aa)) enclose the PAZ domain. One can recognise a Piwi domain in the interval 577-885 (FILCVLPDKK…AAAQLGTFMK (309 aa)). The Nuclear localization signal signature appears at 584-591 (DKKNSDLY).

Belongs to the argonaute family. Ago subfamily. Interacts with NRPE1 (via C-terminus). Binding to NRPE1 is required for its function in RdDM. Interacts with turnip crinkle virus (TCV) capsid protein P38; this interaction inhibits probably RNA silencing ability of AGO4. Interacts with SDE3. Binds to RDM3. Binds chromatin at loci subject to transcriptional silencing. Interacts with MBD6. Expressed in embryos, mature leaves, vascular tissue of the sepals, stamens and stigma, at the tip of the style and siliques.

It is found in the nucleus. Its subcellular location is the nucleolus. The protein localises to the nucleoplasm. The protein resides in the cajal body. Together with RDM3, required for transcriptional gene silencing (TGS) by DNA methylation and repressive histone modifications (H3K9me2) of several chromatin loci. Component of the RISC complex that associate with the small interfering RNA (siRNA) pathway involved in direct cytosine methylation at endogenous DNA repeats. Forms a AGO4/NRPE1/siRNA complex in cajal body, facilitating its function in RNA-directed gene silencing of target loci. Required for CpNpG and asymmetric DNA methylation as well as histone H3 'Lys-9' methylation (H3K9me) at SUP and SN1 loci. May be not required for CpG methylation. Required for the production and maintenance of retrotransposon SN1 and Copia and ribosomal 5S 25 nucleotide siRNAs specialized in gene silencing at chromatin level. Involved in de novo methylation of FWA gene and required for the maintenance of RNA-directed DNA methylation (RdDM) triggered by inverted repeat transgenes. Interacts with miRNA miR390 and miR172, targeting respectively TAS3 and AP2 mRNAs, and mediates cleavage of miRNA targets. Associates mainly with small RNAs of 24 nucleotide in length and preferentially recruits small RNAs with a 5' terminal adenosine. Targeted by the turnip yellows virus (TuYV) protein P0 (via F-box-like domain) for probable proteasome degradation and thereby inactivating AGO4 function in RNA silencing. Required for resistance to the bacterial pathogen P.syringae. Works independently of the RdDM pathway in mediating resistance to P.syringae. RdDM is involved in viral genome methylation as an epigenetic defense against geminiviruses. The sequence is that of Protein argonaute 4 from Arabidopsis thaliana (Mouse-ear cress).